The primary structure comprises 320 residues: Ferrochelatase (320 aa).

2 residues coordinate Fe cation: H194 and E275.

Belongs to the ferrochelatase family. As to quaternary structure, monomer.

Its subcellular location is the cytoplasm. The catalysed reaction is heme b + 2 H(+) = protoporphyrin IX + Fe(2+). Its pathway is porphyrin-containing compound metabolism; protoheme biosynthesis; protoheme from protoporphyrin-IX: step 1/1. Its function is as follows. Catalyzes the ferrous insertion into protoporphyrin IX. The chain is Ferrochelatase from Salmonella arizonae (strain ATCC BAA-731 / CDC346-86 / RSK2980).